We begin with the raw amino-acid sequence, 131 residues long: Snaclec alboaggregin-A subunit alpha (131 aa).

The region spanning 1 to 131 (DCPSDWSSYD…EYPFVCKFXR (131 aa)) is the C-type lectin domain. 3 disulfides stabilise this stretch: C2–C13, C30–C127, and C102–C119.

The protein belongs to the snaclec family. As to quaternary structure, heterotetramer of the subunits alpha, alpha', beta and beta'; disulfide-linked. As to expression, expressed by the venom gland.

The protein resides in the secreted. In terms of biological role, potent platelet activator that aggregates platelets via both GPIbalpha (GP1BA) and GPVI (GP6). Induces a tyrosine phosphorylation profile in platelets that resembles this produced by collagen, involving the time dependent tyrosine phosphorylation of Fc receptor gamma chain (FCGR1A), phospholipase Cgamma2 (PLCG2), and LAT. The polypeptide is Snaclec alboaggregin-A subunit alpha (Trimeresurus albolabris (White-lipped pit viper)).